The sequence spans 348 residues: D-alanine--D-alanine ligase (348 aa).

Positions Lys136 to Glu344 constitute an ATP-grasp domain. An ATP-binding site is contributed by Asn171–Glu226. Positions 297, 311, and 313 each coordinate Mg(2+).

The protein belongs to the D-alanine--D-alanine ligase family. Requires Mg(2+) as cofactor. Mn(2+) serves as cofactor.

It localises to the cytoplasm. It catalyses the reaction 2 D-alanine + ATP = D-alanyl-D-alanine + ADP + phosphate + H(+). It participates in cell wall biogenesis; peptidoglycan biosynthesis. Cell wall formation. This is D-alanine--D-alanine ligase from Prochlorococcus marinus (strain NATL2A).